The chain runs to 727 residues: E3 ubiquitin-protein ligase LRSAM1 (727 aa).

LRR repeat units lie at residues 30–51 (ADDI…AFAT), 56–77 (QKKV…SCSL), 82–103 (TIKV…MGQL), 105–126 (VLQV…IGNL), 128–150 (QLQT…GELR), and 151–172 (SLRT…LAHV). The segment at 227–248 (GAENTQDSPDGPASRFSREEAE) is disordered. Ser-234 carries the phosphoserine modification. Coiled-coil stretches lie at residues 241 to 382 (RFSR…NLRQ) and 469 to 547 (RQIR…QENY). Residues 569–632 (GMERRLVALL…LRRAQDLLAV (64 aa)) enclose the SAM domain. Ser-604 is modified (phosphoserine). 2 short sequence motifs (PTAP motif) span residues 653–656 (PTAP) and 665–668 (PSAP). Residues 679–714 (CVVCLEREAQMVFLTCGHVCCCQQCCQPLRTCPLCR) form an RING-type zinc finger.

As to quaternary structure, interacts with TSG101. Interacts with PHF23. Interacts with FUS. Ubiquitination promoted by PHF23 leads to proteasomal degradation. In terms of tissue distribution, widely expressed.

Its subcellular location is the cytoplasm. The enzyme catalyses S-ubiquitinyl-[E2 ubiquitin-conjugating enzyme]-L-cysteine + [acceptor protein]-L-lysine = [E2 ubiquitin-conjugating enzyme]-L-cysteine + N(6)-ubiquitinyl-[acceptor protein]-L-lysine.. It participates in protein modification; protein ubiquitination. Functionally, E3 ubiquitin-protein ligase that mediates monoubiquitination of TSG101 at multiple sites, leading to inactivate the ability of TSG101 to sort endocytic (EGF receptors) and exocytic (viral proteins) cargos. Bacterial recognition protein that defends the cytoplasm from invasive pathogens. Localizes to several intracellular bacterial pathogens and generates the bacteria-associated ubiquitin signal leading to autophagy-mediated intracellular bacteria degradation (xenophagy). This Mus musculus (Mouse) protein is E3 ubiquitin-protein ligase LRSAM1.